The following is a 202-amino-acid chain: Probable WRKY transcription factor 59 (202 aa).

The segment at residues 103-168 is a DNA-binding region (WRKY); sequence DEKVALDDGY…YEGRHNHPSP (66 aa).

This sequence belongs to the WRKY group II-c family.

Its subcellular location is the nucleus. Its function is as follows. Transcription factor. Interacts specifically with the W box (5'-(T)TGAC[CT]-3'), a frequently occurring elicitor-responsive cis-acting element. The sequence is that of Probable WRKY transcription factor 59 (WRKY59) from Arabidopsis thaliana (Mouse-ear cress).